Consider the following 452-residue polypeptide: Pup--protein ligase (452 aa).

Glutamate 9 is a binding site for Mg(2+). Arginine 53 contributes to the ATP binding site. Tyrosine 55 contributes to the Mg(2+) binding site. The active-site Proton acceptor is aspartate 57. Glutamate 63 is a binding site for Mg(2+). Threonine 66 and tryptophan 419 together coordinate ATP.

It belongs to the Pup ligase/Pup deamidase family. Pup-conjugating enzyme subfamily.

The enzyme catalyses ATP + [prokaryotic ubiquitin-like protein]-L-glutamate + [protein]-L-lysine = ADP + phosphate + N(6)-([prokaryotic ubiquitin-like protein]-gamma-L-glutamyl)-[protein]-L-lysine.. Its pathway is protein degradation; proteasomal Pup-dependent pathway. It functions in the pathway protein modification; protein pupylation. In terms of biological role, catalyzes the covalent attachment of the prokaryotic ubiquitin-like protein modifier Pup to the proteasomal substrate proteins, thereby targeting them for proteasomal degradation. This tagging system is termed pupylation. The ligation reaction involves the side-chain carboxylate of the C-terminal glutamate of Pup and the side-chain amino group of a substrate lysine. The protein is Pup--protein ligase of Salinispora tropica (strain ATCC BAA-916 / DSM 44818 / JCM 13857 / NBRC 105044 / CNB-440).